The primary structure comprises 404 residues: Agnestins biosynthesis cluster transcription factor AgnL10 (404 aa).

The segment at residues Cys23 to Cys50 is a DNA-binding region (zn(2)-C6 fungal-type). Disordered regions lie at residues Ala54–Ala83, Ala188–Gly209, and Pro294–Asp318. Residues Arg57–Asn68 are compositionally biased toward basic residues. Polar residues predominate over residues Pro74–Ala83. Low complexity predominate over residues Ala188–Ala197.

It is found in the nucleus. In terms of biological role, transcription factor that regulates the expression of the gene cluster that mediates the biosynthesis of agnestins, dihydroxy-xanthone metabolites. This chain is Agnestins biosynthesis cluster transcription factor AgnL10, found in Paecilomyces divaricatus (Penicillium divaricatum).